A 392-amino-acid chain; its full sequence is Cell division protein DivIB (392 aa).

Positions 1–88 (MSEKDNNLTP…TQSSEAPIEN (88 aa)) are disordered. The Cytoplasmic segment spans residues 1–131 (MSEKDNNLTP…KGSAPLLKKM (131 aa)). Over residues 14 to 32 (KHLEYQKRKAEEAKKEKKA) the composition is skewed to basic and acidic residues. Acidic residues predominate over residues 58–76 (TRDEAESAELLEEGFETNN). The chain crosses the membrane as a helical span at residues 132–152 (WPALAVVVLVFVGSLYLISPL). The region spanning 153-224 (SKISTFSVSG…NRFEAIVKEH (72 aa)) is the POTRA domain. Over 153–392 (SKISTFSVSG…TAQSTTTSSN (240 aa)) the chain is Extracellular. A disordered region spans residues 368-392 (ISAQNAKKTDASSENTAQSTTTSSN).

Belongs to the FtsQ/DivIB family. DivIB subfamily.

It is found in the cell membrane. Functionally, cell division protein that may be involved in stabilizing or promoting the assembly of the division complex. This chain is Cell division protein DivIB, found in Lactococcus lactis subsp. lactis (strain KF147).